A 114-amino-acid chain; its full sequence is Ribosome-binding factor A (114 aa).

It belongs to the RbfA family. Monomer. Binds 30S ribosomal subunits, but not 50S ribosomal subunits or 70S ribosomes.

It is found in the cytoplasm. Functionally, one of several proteins that assist in the late maturation steps of the functional core of the 30S ribosomal subunit. Associates with free 30S ribosomal subunits (but not with 30S subunits that are part of 70S ribosomes or polysomes). Required for efficient processing of 16S rRNA. May interact with the 5'-terminal helix region of 16S rRNA. The protein is Ribosome-binding factor A of Listeria welshimeri serovar 6b (strain ATCC 35897 / DSM 20650 / CCUG 15529 / CIP 8149 / NCTC 11857 / SLCC 5334 / V8).